The following is a 652-amino-acid chain: DNA ligase (652 aa).

NAD(+) is bound by residues 29 to 33 (DSEYD), 78 to 79 (SL), and Glu107. The N6-AMP-lysine intermediate role is filled by Lys109. NAD(+) is bound by residues Arg130, Glu164, Lys278, and Lys302. Residues Cys395, Cys398, Cys413, and Cys418 each coordinate Zn(2+). The 76-residue stretch at 577-652 (AADAVLSGKT…IQDEAWLEQL (76 aa)) folds into the BRCT domain.

This sequence belongs to the NAD-dependent DNA ligase family. LigA subfamily. Requires Mg(2+) as cofactor. Mn(2+) serves as cofactor.

The catalysed reaction is NAD(+) + (deoxyribonucleotide)n-3'-hydroxyl + 5'-phospho-(deoxyribonucleotide)m = (deoxyribonucleotide)n+m + AMP + beta-nicotinamide D-nucleotide.. Its function is as follows. DNA ligase that catalyzes the formation of phosphodiester linkages between 5'-phosphoryl and 3'-hydroxyl groups in double-stranded DNA using NAD as a coenzyme and as the energy source for the reaction. It is essential for DNA replication and repair of damaged DNA. This Streptococcus gordonii (strain Challis / ATCC 35105 / BCRC 15272 / CH1 / DL1 / V288) protein is DNA ligase.